Here is a 743-residue protein sequence, read N- to C-terminus: MYHPNMFESHHMFDMTPKSTSDNDLGITGSREDDFETKSGTEVTTENPSGEELQDPSQRPNKKKRYHRHTQRQIQELESFFKECPHPDDKQRKELSRDLNLEPLQVKFWFQNKRTQMKAQSERHENQILKSDNDKLRAENNRYKEALSNATCPNCGGPAAIGEMSFDEQHLRIENARLREEIDRISAIAAKYVGKPLGSSFAPLAIHAPSRSLDLEVGNFGNQTGFVGEMYGTGDILRSVSIPSETDKPIIVELAVAAMEELVRMAQTGDPLWLSTDNSVEILNEEEYFRTFPRGIGPKPLGLRSEASRQSAVVIMNHINLVEILMDVNQWSCVFSGIVSRALTLEVLSTGVAGNYNGALQVMTAEFQVPSPLVPTRENYFVRYCKQHSDGSWAVVDVSLDSLRPSTPILRTRRRPSGCLIQELPNGYSKVTWIEHMEVDDRSVHNMYKPLVQSGLAFGAKRWVATLERQCERLASSMASNIPGDLSVITSPEGRKSMLKLAERMVMSFCSGVGASTAHAWTTMSTTGSDDVRVMTRKSMDDPGRPPGIVLSAATSFWIPVAPKRVFDFLRDENSRKEWDILSNGGMVQEMAHIANGHEPGNCVSLLRVNSGNSSQSNMLILQESCTDASGSYVIYAPVDIVAMNVVLSGGDPDYVALLPSGFAILPDGSVGGGDGNQHQEMVSTTSSGSCGGSLLTVAFQILVDSVPTAKLSLGSVATVNSLIKCTVERIKAAVSCDVGGGA.

Residues 1-72 (MYHPNMFESH…KKRYHRHTQR (72 aa)) are disordered. Over residues 30–39 (SREDDFETKS) the composition is skewed to basic and acidic residues. Residues 60–71 (PNKKKRYHRHTQ) are compositionally biased toward basic residues. The homeobox DNA-binding region spans 62–121 (KKKRYHRHTQRQIQELESFFKECPHPDDKQRKELSRDLNLEPLQVKFWFQNKRTQMKAQS). The stretch at 110-192 (FQNKRTQMKA…DRISAIAAKY (83 aa)) forms a coiled coil. Residues 244 to 476 (SETDKPIIVE…LERQCERLAS (233 aa)) form the START domain.

The protein belongs to the HD-ZIP homeobox family. Class IV subfamily. As to quaternary structure, interacts with GAI/RGA2, RGA/RGA1/GRS, RGL2/SCL19 and ATML1. Binds to AIL7/PLT7, ANT, BBM and AIL1. In terms of tissue distribution, specifically expressed in the layer 1 (L1) of shoot meristems.

The protein localises to the nucleus. Its function is as follows. Probable transcription factor that binds to the L1 box DNA sequence 5'-TAAATG[CT]A-3'. Plays a role in maintaining the identity of L1 cells, possibly by interacting with their L1 box or other target-gene promoters; binds to the LIP1 gene promoter and stimulates its expression upon imbibition. Acts as a positive regulator of gibberellins (GAs)-regulated epidermal gene expression (e.g. LIP1, LIP2, LTP1, FDH and PDF1). Functionally redundant to ATML1. Involved, together with HDG proteins (e.g. HDG1, HDG2, HDG5 and HDG12), in the regulation of flower organs development by promoting the expression of APETALA 3 (AP3) in the epidermis and internal cell layers of developing flowers. Seems to promote cell differentiation. The sequence is that of Homeobox-leucine zipper protein PROTODERMAL FACTOR 2 from Arabidopsis thaliana (Mouse-ear cress).